A 514-amino-acid chain; its full sequence is 2-isopropylmalate synthase (514 aa).

Residues 5 to 267 (LIIFDTTLRD…HTDIETREIV (263 aa)) form the Pyruvate carboxyltransferase domain. Residues Asp-14, His-202, His-204, and Asn-238 each contribute to the Mn(2+) site. The interval 393 to 514 (KLVALRVCSE…QRTHPQVGDV (122 aa)) is regulatory domain.

This sequence belongs to the alpha-IPM synthase/homocitrate synthase family. LeuA type 1 subfamily. As to quaternary structure, homodimer. Mn(2+) is required as a cofactor.

It localises to the cytoplasm. It catalyses the reaction 3-methyl-2-oxobutanoate + acetyl-CoA + H2O = (2S)-2-isopropylmalate + CoA + H(+). Its pathway is amino-acid biosynthesis; L-leucine biosynthesis; L-leucine from 3-methyl-2-oxobutanoate: step 1/4. Its function is as follows. Catalyzes the condensation of the acetyl group of acetyl-CoA with 3-methyl-2-oxobutanoate (2-ketoisovalerate) to form 3-carboxy-3-hydroxy-4-methylpentanoate (2-isopropylmalate). The chain is 2-isopropylmalate synthase from Methylococcus capsulatus (strain ATCC 33009 / NCIMB 11132 / Bath).